The sequence spans 479 residues: Endosomal/lysosomal proton channel TMEM175 (479 aa).

The disordered stretch occupies residues 1 to 26; that stretch reads MSGPQAPEPTLEGQADASAGSPDEDA. Topologically, residues 1–33 are cytoplasmic; it reads MSGPQAPEPTLEGQADASAGSPDEDAAEGIQHS. The chain crosses the membrane as a helical span at residues 34–56; that stretch reads HRMLSFSDALLSIIATVMEFDKS. Residues 35 to 41 carry the RxxxFSD motif 1 motif; sequence RMLSFSD. The interval 52-58 is short helix H2-1; that stretch reads EFDKSVQ. Topologically, residues 57 to 64 are lumenal; sequence VQRLLATR. A helical membrane pass occupies residues 65-87; that stretch reads IAVYLMTFLIVTVAWAAHTRLFQ. At 88–93 the chain is on the cytoplasmic side; it reads VVGKID. Residues 94-103 form a helical membrane-spanning segment; it reads DTLALLNLFS. Residues 104-113 lie on the Lumenal side of the membrane; that stretch reads LMVTFPEVPL. Residues 114 to 135 traverse the membrane as a helical segment; it reads GIFLFCMCVIAIGAVQALIVLY. Residues 136-159 are Cytoplasmic-facing; the sequence is AFHFPHLLSPQIERSAHRGLYRQR. A helical membrane pass occupies residues 160–180; that stretch reads VLGIIVRGPALCLAAAGFSLF. The Lumenal segment spans residues 181–185; that stretch reads FYPAS. Residues 186 to 205 form a helical membrane-spanning segment; the sequence is YLLMAMVIVLPHVSKAAGWC. Residues 206–232 lie on the Cytoplasmic side of the membrane; the sequence is RAQLVGPREPPAHSVEVFTFDLHEPLS. A helical transmembrane segment spans residues 233-257; sequence KERVEAFSDGVYAIVATLLILDICE. Positions 235-241 match the RxxxFSD motif 2 motif; the sequence is RVEAFSD. Topologically, residues 258–284 are lumenal; it reads DNVPDAKDVKEKFQGSLVAALGESGPH. Positions 263 to 271 are short helix H1-2; it reads AKDVKEKFQ. The short helix H2-2 stretch occupies residues 273–279; that stretch reads SLVAALG. Residues 285-307 form a helical membrane-spanning segment; sequence FLAYFGSFATVGLLWFAHHSLFL. Residues 308–313 lie on the Cytoplasmic side of the membrane; it reads HIRRAT. Residues 314–335 form a helical membrane-spanning segment; that stretch reads QPMGLLNTLSLAFVGGLPLAYQ. Residues 336 to 350 are Lumenal-facing; that stretch reads QTSAFTKQPRDELES. The helical transmembrane segment at 351-371 threads the bilayer; the sequence is VRISCAIIFLASIFQFAIWTT. At 372 to 391 the chain is on the cytoplasmic side; it reads ALLQEGETLQPSARFGGREH. A helical transmembrane segment spans residues 392–415; it reads AFMFAKLALYPCASLLAFACTCVL. The Lumenal portion of the chain corresponds to 416-417; that stretch reads SS. The chain crosses the membrane as a helical span at residues 418 to 444; the sequence is FSTAIFHAMQIAVPFAFLLLRLLVRLA. Topologically, residues 445-479 are cytoplasmic; it reads LAGLRALRGLVGPVLARPAPGAADEAQSPLLPAPC.

It belongs to the TMEM175 family. As to quaternary structure, homodimer. Interacts with AKT (AKT1, AKT2 or AKT3); leading to formation of the lysoK(GF) complex, which activates the channel. Interacts with LAMP1; inhibiting the proton channel activity of TMEM175. Interacts with LAMP2; inhibiting the proton channel activity of TMEM175.

It localises to the endosome membrane. The protein resides in the lysosome membrane. The enzyme catalyses H(+)(in) = H(+)(out). The catalysed reaction is K(+)(in) = K(+)(out). Its activity is regulated as follows. Active at low pH (under pH 4.6): proton channel activity is activated by luminal side protons. Polyunsaturated fatty acids, such as arachidonic acid, also activate the channel activity. Proton channel activity is directly inhibited by LAMP1 or LAMP2, facilitating lysosomal acidification. Channel activity is activated following interaction with AKT (AKT1, AKT2 or AKT3): interaction promotes activation from closed to an open state. Activation by AKT is independent of AKT serine/threonine-protein kinase activity. Its function is as follows. Proton-activated proton channel that catalyzes proton efflux from endosomes and lysosomes to maintain a steady-state pH. Activated at low pH (under pH 4.6) by luminal side protons: selectively mediates lysosomal proton release from lysosomes, eliciting a proton leak that balances V-ATPase activity to maintain pH homeostasis. Regulation of lumenal pH stability is required for autophagosome-lysosome fusion. Also acts as a potassium channel at higher pH, regulating potassium conductance in endosomes and lysosomes. Constitutes the pore-forming subunit of the lysoK(GF) complex, a complex activated by extracellular growth factors. The lysoK(GF) complex is composed of TMEM175 and AKT (AKT1, AKT2 or AKT3), a major target of growth factor receptors: in the complex, TMEM175 channel is opened by conformational changes by AKT, leading to its activation. The lysoK(GF) complex is required to protect neurons against stress-induced damage. This chain is Endosomal/lysosomal proton channel TMEM175, found in Bos taurus (Bovine).